We begin with the raw amino-acid sequence, 106 residues long: ATPase inhibitor, mitochondrial (106 aa).

The transit peptide at 1–25 (MAGSALAVRARFGVWGMKVLQTRGF) directs the protein to the mitochondrion. The segment at 26 to 52 (VSDSSDSMDTGAGSIREAGGAFGKREK) is N-terminal inhibitory region. The interval 26 to 58 (VSDSSDSMDTGAGSIREAGGAFGKREKAEEDRY) is disordered. The residue at position 39 (Ser39) is a Phosphoserine. Positions 48–58 (GKREKAEEDRY) are enriched in basic and acidic residues. The stretch at 60–106 (REKTKEQLAALRKHHEDEIDHHSKEIERLQKQIERHKKKIQQLKNNH) forms a coiled coil. Residues 74-106 (HEDEIDHHSKEIERLQKQIERHKKKIQQLKNNH) are antiparallel alpha-helical coiled coil region. Residue Lys103 is modified to N6-succinyllysine.

The protein belongs to the ATPase inhibitor family. As to quaternary structure, homodimer; represents the active form and is present at a pH value below 6.5. Homotetramer; represents the inactive form and is present at a pH value above 7.0.

Its subcellular location is the mitochondrion. Endogenous F(1)F(o)-ATPase inhibitor limiting ATP depletion when the mitochondrial membrane potential falls below a threshold and the F(1)F(o)-ATP synthase starts hydrolyzing ATP to pump protons out of the mitochondrial matrix. Required to avoid the consumption of cellular ATP when the F(1)F(o)-ATP synthase enzyme acts as an ATP hydrolase. Indirectly acts as a regulator of heme synthesis in erythroid tissues: regulates heme synthesis by modulating the mitochondrial pH and redox potential, allowing FECH to efficiently catalyze the incorporation of iron into protoporphyrin IX to produce heme. The chain is ATPase inhibitor, mitochondrial from Mus musculus (Mouse).